A 305-amino-acid polypeptide reads, in one-letter code: Translation initiation factor eIF2B subunit alpha (305 aa).

The residue at position 35 (lysine 35) is an N6-acetyllysine.

This sequence belongs to the eIF-2B alpha/beta/delta subunits family. Component of the translation initiation factor 2B (eIF2B) complex which is a heterodecamer of two sets of five different subunits: alpha, beta, gamma, delta and epsilon. Subunits alpha, beta and delta comprise a regulatory subcomplex and subunits epsilon and gamma comprise a catalytic subcomplex. Within the complex, the hexameric regulatory complex resides at the center, with the two heterodimeric catalytic subcomplexes bound on opposite sides.

Its subcellular location is the cytoplasm. The protein localises to the cytosol. Its activity is regulated as follows. Activated by the chemical integrated stress response (ISR) inhibitor ISRIB which stimulates guanine nucleotide exchange factor activity for both phosphorylated and unphosphorylated eIF2. Acts as a component of the translation initiation factor 2B (eIF2B) complex, which catalyzes the exchange of GDP for GTP on eukaryotic initiation factor 2 (eIF2) gamma subunit. Its guanine nucleotide exchange factor activity is repressed when bound to eIF2 complex phosphorylated on the alpha subunit, thereby limiting the amount of methionyl-initiator methionine tRNA available to the ribosome and consequently global translation is repressed. The polypeptide is Translation initiation factor eIF2B subunit alpha (Eif2b1) (Mus musculus (Mouse)).